The sequence spans 323 residues: Aldo-keto reductase family 1 member C3 (323 aa).

NADP(+) contacts are provided by residues Gly-20–Tyr-24 and Asp-50. Tyr-55 acts as the Proton donor in catalysis. His-117 contributes to the substrate binding site. Residues Ser-166–Asn-167, Gln-190, Tyr-216–Ser-221, and Lys-270–Asn-280 each bind NADP(+).

The protein belongs to the aldo/keto reductase family.

It localises to the cytoplasm. The enzyme catalyses a 3alpha-hydroxysteroid + NADP(+) = a 3-oxosteroid + NADPH + H(+). The catalysed reaction is a 3alpha-hydroxysteroid + NAD(+) = a 3-oxosteroid + NADH + H(+). It catalyses the reaction prostaglandin F2alpha + NADP(+) = prostaglandin D2 + NADPH + H(+). It carries out the reaction testosterone + NAD(+) = androst-4-ene-3,17-dione + NADH + H(+). The enzyme catalyses testosterone + NADP(+) = androst-4-ene-3,17-dione + NADPH + H(+). The catalysed reaction is prostaglandin F2alpha + NADP(+) = prostaglandin H2 + NADPH + H(+). It catalyses the reaction prostaglandin D2 + NADPH + H(+) = 11beta-prostaglandin F2 + NADP(+). It carries out the reaction prostaglandin D2-ethanolamide + NADPH + H(+) = 11beta-prostaglandin F2-ethanolamide + NADP(+). The enzyme catalyses 17beta-estradiol + NADP(+) = estrone + NADPH + H(+). The catalysed reaction is 17beta-estradiol + NAD(+) = estrone + NADH + H(+). It catalyses the reaction (20S)-hydroxypregn-4-en-3-one + NADP(+) = progesterone + NADPH + H(+). It carries out the reaction (20S)-hydroxypregn-4-en-3-one + NAD(+) = progesterone + NADH + H(+). The enzyme catalyses 5alpha-androstane-3alpha,17beta-diol + NADP(+) = 17beta-hydroxy-5alpha-androstan-3-one + NADPH + H(+). The catalysed reaction is 5alpha-androstane-3alpha,17beta-diol + NAD(+) = 17beta-hydroxy-5alpha-androstan-3-one + NADH + H(+). It catalyses the reaction androsterone + NADPH + H(+) = 5alpha-androstane-3alpha,17beta-diol + NADP(+). It carries out the reaction 5alpha-androstane-3alpha,17beta-diol + NAD(+) = androsterone + NADH + H(+). The enzyme catalyses 5alpha-androstane-3beta,17beta-diol + NADP(+) = 17beta-hydroxy-5alpha-androstan-3-one + NADPH + H(+). The catalysed reaction is 9-cis-retinol + NADP(+) = 9-cis-retinal + NADPH + H(+). It functions in the pathway steroid metabolism. In terms of biological role, cytosolic aldo-keto reductase that catalyzes the NADH and NADPH-dependent reduction of ketosteroids to hydroxysteroids. Acts as a NAD(P)(H)-dependent 3-, 17- and 20-ketosteroid reductase on the steroid nucleus and side chain and regulates the metabolism of androgens, estrogens and progesterone. Displays the ability to catalyze both oxidation and reduction in vitro, but most probably acts as a reductase in vivo since the oxidase activity measured in vitro is inhibited by physiological concentration of NADPH. Acts preferentially as a 17-ketosteroid reductase and has the highest catalytic efficiency of the AKR1C enzyme for the reduction of delta4-androstenedione to form testosterone. Reduces prostaglandin (PG) D2 to 11beta-prostaglandin F2, progesterone to 20alpha-hydroxyprogesterone and estrone to 17beta-estradiol. Catalyzes the transformation of the potent androgen dihydrotestosterone (DHT) into the less active form, 5-alpha-androstan-3-alpha,17-beta-diol (3-alpha-diol). Also displays retinaldehyde reductase activity toward 9-cis-retinal. The protein is Aldo-keto reductase family 1 member C3 (AKR1C3) of Pongo abelii (Sumatran orangutan).